Reading from the N-terminus, the 280-residue chain is Myelin proteolipid protein B (280 aa).

The Cytoplasmic portion of the chain corresponds to 1–10 (MGWHDGCIRC). 2 S-palmitoyl cysteine lipidation sites follow: cysteine 7 and cysteine 10. Residues 11–36 (MVGVPFASVIATVLCFAGVALFCGCG) traverse the membrane as a helical segment. At 37–59 (HEALSGTEKLIETYFSKNYQEYE) the chain is on the extracellular side. The helical transmembrane segment at 60 to 88 (YLIHVINAFQYVIYGIAIFFFLYGILLLA) threads the bilayer. Residues 89 to 152 (EGFYTTTAIK…LGKWLGHPDK (64 aa)) are Cytoplasmic-facing. Residues cysteine 140 and cysteine 142 are each lipidated (S-palmitoyl cysteine). Residues 153–179 (FVGVTYVITILWILIFACSAVPVYIYF) form a helical membrane-spanning segment. The Extracellular portion of the chain corresponds to 180 to 239 (NTWVTCQSIAFPGKTTTSVSTLCLDARMYGVLPWNAFPGKVCGTSLLAICKTSEFQMTFH). Intrachain disulfides connect cysteine 185–cysteine 229 and cysteine 202–cysteine 221. Residues 240–269 (LFIAAFVGAAATLVALLTYMVGASFNYAVL) traverse the membrane as a helical segment. Over 270–280 (RVTGRSDRSKF) the chain is Cytoplasmic.

It belongs to the myelin proteolipid protein family.

It localises to the cell membrane. Functionally, this is the major myelin protein from the central nervous system. It plays an important role in the formation or maintenance of the multilamellar structure of myelin. This chain is Myelin proteolipid protein B (plp1-b), found in Xenopus laevis (African clawed frog).